The primary structure comprises 494 residues: Aspartyl/glutamyl-tRNA(Asn/Gln) amidotransferase subunit B (494 aa).

This sequence belongs to the GatB/GatE family. GatB subfamily. Heterotrimer of A, B and C subunits.

It carries out the reaction L-glutamyl-tRNA(Gln) + L-glutamine + ATP + H2O = L-glutaminyl-tRNA(Gln) + L-glutamate + ADP + phosphate + H(+). The catalysed reaction is L-aspartyl-tRNA(Asn) + L-glutamine + ATP + H2O = L-asparaginyl-tRNA(Asn) + L-glutamate + ADP + phosphate + 2 H(+). Allows the formation of correctly charged Asn-tRNA(Asn) or Gln-tRNA(Gln) through the transamidation of misacylated Asp-tRNA(Asn) or Glu-tRNA(Gln) in organisms which lack either or both of asparaginyl-tRNA or glutaminyl-tRNA synthetases. The reaction takes place in the presence of glutamine and ATP through an activated phospho-Asp-tRNA(Asn) or phospho-Glu-tRNA(Gln). The chain is Aspartyl/glutamyl-tRNA(Asn/Gln) amidotransferase subunit B from Rhodopseudomonas palustris (strain BisB18).